A 254-amino-acid chain; its full sequence is Hydroxyacylglutathione hydrolase (254 aa).

Zn(2+) is bound by residues His54, His56, Asp58, His59, His111, Asp130, and His168.

The protein belongs to the metallo-beta-lactamase superfamily. Glyoxalase II family. As to quaternary structure, monomer. It depends on Zn(2+) as a cofactor.

The catalysed reaction is an S-(2-hydroxyacyl)glutathione + H2O = a 2-hydroxy carboxylate + glutathione + H(+). It participates in secondary metabolite metabolism; methylglyoxal degradation; (R)-lactate from methylglyoxal: step 2/2. Its function is as follows. Thiolesterase that catalyzes the hydrolysis of S-D-lactoyl-glutathione to form glutathione and D-lactic acid. This Legionella pneumophila (strain Corby) protein is Hydroxyacylglutathione hydrolase.